A 192-amino-acid chain; its full sequence is Shikimate kinase (192 aa).

26 to 31 (ASGKSS) contributes to the ATP binding site. Residue Ser30 participates in Mg(2+) binding. Substrate is bound by residues Asp48, Arg72, and Gly94. Residue Arg132 coordinates ATP. Residue Arg151 coordinates substrate.

The protein belongs to the shikimate kinase family. Monomer. The cofactor is Mg(2+).

The protein localises to the cytoplasm. The catalysed reaction is shikimate + ATP = 3-phosphoshikimate + ADP + H(+). Its pathway is metabolic intermediate biosynthesis; chorismate biosynthesis; chorismate from D-erythrose 4-phosphate and phosphoenolpyruvate: step 5/7. Its function is as follows. Catalyzes the specific phosphorylation of the 3-hydroxyl group of shikimic acid using ATP as a cosubstrate. The chain is Shikimate kinase from Prochlorococcus marinus (strain MIT 9313).